The chain runs to 139 residues: Large-conductance mechanosensitive channel (139 aa).

A run of 3 helical transmembrane segments spans residues 14 to 34 (VVDL…VNSA), 38 to 58 (IFMP…YYIP), and 82 to 102 (GQFL…FLVI).

The protein belongs to the MscL family. As to quaternary structure, homopentamer.

The protein resides in the cell inner membrane. Functionally, channel that opens in response to stretch forces in the membrane lipid bilayer. May participate in the regulation of osmotic pressure changes within the cell. This Methylobacterium radiotolerans (strain ATCC 27329 / DSM 1819 / JCM 2831 / NBRC 15690 / NCIMB 10815 / 0-1) protein is Large-conductance mechanosensitive channel.